A 362-amino-acid chain; its full sequence is Acetylajmalan esterase 2 (362 aa).

An N-terminal signal peptide occupies residues 1-23 (MGFAARPFHIVFSLFVLAGATQA). The active-site Nucleophile is the serine 38. N-linked (GlcNAc...) asparagine glycosylation is found at asparagine 100, asparagine 118, asparagine 151, and asparagine 202. Active-site residues include aspartate 335 and histidine 338.

The protein belongs to the 'GDSL' lipolytic enzyme family. As to expression, confined to roots.

The enzyme catalyses 17-O-acetylnorajmaline + H2O = norajmaline + acetate + H(+). The catalysed reaction is 17-O-acetylajmaline + H2O = ajmaline + acetate + H(+). The protein operates within alkaloid biosynthesis; ajmaline biosynthesis. Its function is as follows. Acetylesterase involved in the biosynthesis of ajmaline-type monoterpenoid indole alkaloids (MIAs) natural products, important plant-derived pharmaceuticals used in the therapy of heart disorders. Deacetylates 17-O-acetylnorajmaline to produce norajmaline. May also catalyze the conversion of 17-O-acetylajmaline to ajmaline. The polypeptide is Acetylajmalan esterase 2 (Rauvolfia serpentina (Serpentine wood)).